The following is a 280-amino-acid chain: UDP-3-O-acyl-N-acetylglucosamine deacetylase (280 aa).

Zn(2+) contacts are provided by histidine 79, histidine 237, and aspartate 241. The active-site Proton donor is the histidine 264.

This sequence belongs to the LpxC family. Zn(2+) is required as a cofactor.

It carries out the reaction a UDP-3-O-[(3R)-3-hydroxyacyl]-N-acetyl-alpha-D-glucosamine + H2O = a UDP-3-O-[(3R)-3-hydroxyacyl]-alpha-D-glucosamine + acetate. It functions in the pathway glycolipid biosynthesis; lipid IV(A) biosynthesis; lipid IV(A) from (3R)-3-hydroxytetradecanoyl-[acyl-carrier-protein] and UDP-N-acetyl-alpha-D-glucosamine: step 2/6. Its function is as follows. Catalyzes the hydrolysis of UDP-3-O-myristoyl-N-acetylglucosamine to form UDP-3-O-myristoylglucosamine and acetate, the committed step in lipid A biosynthesis. The polypeptide is UDP-3-O-acyl-N-acetylglucosamine deacetylase (Chlamydia caviae (strain ATCC VR-813 / DSM 19441 / 03DC25 / GPIC) (Chlamydophila caviae)).